Here is a 520-residue protein sequence, read N- to C-terminus: Alkyl hydroperoxide reductase subunit F (520 aa).

Position 213-228 (213-228 (DVLVVGGGPAGAAAAI)) interacts with FAD. A disulfide bridge connects residues cysteine 343 and cysteine 346. 355–369 (RVAVIGGGNSGVEAA) is a binding site for NAD(+). 476-486 (TSIPGVFAAGD) is an FAD binding site.

Belongs to the class-II pyridine nucleotide-disulfide oxidoreductase family. In terms of assembly, homodimer. Requires FAD as cofactor.

Serves to protect the cell against DNA damage by alkyl hydroperoxides. It can use either NADH or NADPH as electron donor for direct reduction of redox dyes or of alkyl hydroperoxides when combined with the AhpC protein. The sequence is that of Alkyl hydroperoxide reductase subunit F (ahpF) from Pseudomonas putida (Arthrobacter siderocapsulatus).